Here is a 355-residue protein sequence, read N- to C-terminus: S-adenosylmethionine:tRNA ribosyltransferase-isomerase (355 aa).

Belongs to the QueA family. As to quaternary structure, monomer.

The protein localises to the cytoplasm. The enzyme catalyses 7-aminomethyl-7-carbaguanosine(34) in tRNA + S-adenosyl-L-methionine = epoxyqueuosine(34) in tRNA + adenine + L-methionine + 2 H(+). It participates in tRNA modification; tRNA-queuosine biosynthesis. In terms of biological role, transfers and isomerizes the ribose moiety from AdoMet to the 7-aminomethyl group of 7-deazaguanine (preQ1-tRNA) to give epoxyqueuosine (oQ-tRNA). The polypeptide is S-adenosylmethionine:tRNA ribosyltransferase-isomerase (Aeromonas salmonicida (strain A449)).